We begin with the raw amino-acid sequence, 437 residues long: Trigger factor (437 aa).

Positions 163–248 constitute a PPIase FKBP-type domain; the sequence is GDIAVINFEG…LNQIKAKVLP (86 aa).

The protein belongs to the FKBP-type PPIase family. Tig subfamily.

It is found in the cytoplasm. The enzyme catalyses [protein]-peptidylproline (omega=180) = [protein]-peptidylproline (omega=0). Functionally, involved in protein export. Acts as a chaperone by maintaining the newly synthesized protein in an open conformation. Functions as a peptidyl-prolyl cis-trans isomerase. This Bdellovibrio bacteriovorus (strain ATCC 15356 / DSM 50701 / NCIMB 9529 / HD100) protein is Trigger factor.